Reading from the N-terminus, the 449-residue chain is Protein tweety homolog 1-A (449 aa).

The Extracellular portion of the chain corresponds to 1-43; sequence MSTSHGYRASWWTNILHQVPHTNFQFEVVDNQFAPQEWPYQQA. A helical membrane pass occupies residues 44–64; the sequence is LLFLASIAGLCLAISLILICV. Residues 65 to 86 lie on the Cytoplasmic side of the membrane; the sequence is YLIRFCCCASQEDDDSKNHRVC. A helical membrane pass occupies residues 87 to 107; that stretch reads CVTWSCVAAVIICCAGIGIGF. Over 108 to 212 the chain is Extracellular; sequence YGNSETNDGV…QVNFIEDYRW (105 aa). N128 carries an N-linked (GlcNAc...) asparagine glycan. A helical membrane pass occupies residues 213–233; that stretch reads LAYILLLLLDLIICLFTLLGL. The Cytoplasmic portion of the chain corresponds to 234-238; it reads AKRIK. A helical membrane pass occupies residues 239–259; sequence WLVIVMTVVSFFVLLLSWGSM. The Extracellular portion of the chain corresponds to 260-388; that stretch reads GLEMATAVGL…LKGLCYDGME (129 aa). Cystine bridges form between C273–C383 and C301–C368. Residues N282 and N353 are each glycosylated (N-linked (GlcNAc...) asparagine). The helical transmembrane segment at 389 to 409 threads the bilayer; that stretch reads GILFLLLFSFLSALSFTAAVC. Residues 410-449 lie on the Cytoplasmic side of the membrane; sequence SLPRAWKRFQNRDLDYDDMDEDDPFNPQESKRFVQWQSSI.

It belongs to the tweety family. Homotetramer; disulfide-linked. Homodimer.

Its subcellular location is the cell membrane. The catalysed reaction is chloride(in) = chloride(out). It catalyses the reaction L-glutamate(out) = L-glutamate(in). May act as a calcium-independent, swelling-dependent volume-regulated anion channel (VRAC-swell) which plays a pivotal role in the process of regulatory volume decrease (RVD) in the brain through the efflux of anions like chloride and organic osmolytes like glutamate. The sequence is that of Protein tweety homolog 1-A (ttyh1-a) from Xenopus laevis (African clawed frog).